A 343-amino-acid chain; its full sequence is MDYKSAGVDVEAGRAFVQRIKSSVEATHRQEVVGGLGGFGGMMRLPAGLRQPLLVSGTDGVGTKLELAQDHQAHHNVGIDLVAMCVNDVITSGAQPLFFLDYMATGALSPDAMAEVVEGIADGCQQSGCSLLGGETAEMPGFYPAGRYDLAGFCVAVVEENELIDGQQVQPGDAVIGVASSGVHSNGFSLVRRVLAQAKADRSTLYGPDQRPLIDDLLRPTQLYASLVKHLLSSSLPIHAMAHITGGGLPENLPRCLPTGCRAQVSPTSWARPPLFDWLQSAGGIPERDLWHTFNLGIGFCVVVPRDQIDRTVAACRAQQLQAWPIGSIVEGNPEDGVIGLPD.

Belongs to the AIR synthase family.

The protein resides in the cytoplasm. It catalyses the reaction 2-formamido-N(1)-(5-O-phospho-beta-D-ribosyl)acetamidine + ATP = 5-amino-1-(5-phospho-beta-D-ribosyl)imidazole + ADP + phosphate + H(+). The protein operates within purine metabolism; IMP biosynthesis via de novo pathway; 5-amino-1-(5-phospho-D-ribosyl)imidazole from N(2)-formyl-N(1)-(5-phospho-D-ribosyl)glycinamide: step 2/2. This Parasynechococcus marenigrum (strain WH8102) protein is Phosphoribosylformylglycinamidine cyclo-ligase.